We begin with the raw amino-acid sequence, 502 residues long: MFS-type transporeter aprT (502 aa).

Residues 1-38 form a disordered region; it reads MASPELASHHSDPSDGEGAPFLPGVDDESPESLNSDIP. A run of 11 helical transmembrane segments spans residues 45–65, 114–136, 150–170, 175–195, 214–234, 239–259, 302–322, 336–356, 380–400, 403–423, and 464–484; these read HGLI…GPMI, IGYR…GLLA, VGFV…NIFP, WFGA…ALFW, FGIA…FVMK, VPLM…NLLP, VAVI…AFLV, ATLL…FILP, VMLL…NTLI, LLLH…ITGL, and LWIG…ALVL. Asn495 is a glycosylation site (N-linked (GlcNAc...) asparagine).

Belongs to the major facilitator superfamily.

It localises to the cell membrane. Functionally, MFS-rype transporer; part of the gene cluster that mediates the biosynthesis of the asperipin-2a, a bicyclic peptide that possesses two macrocyclic ether rings consisting of 14- and 17-membered paracyclophans. AprT is likely to be involved in the cellular export of asperipin-2a. The protein is MFS-type transporeter aprT of Aspergillus flavus (strain ATCC 200026 / FGSC A1120 / IAM 13836 / NRRL 3357 / JCM 12722 / SRRC 167).